The primary structure comprises 682 residues: DNA-directed RNA polymerase subunit beta' (682 aa).

Residues Cys69, Cys71, Cys87, and Cys90 each coordinate Zn(2+). Positions 489, 491, and 493 each coordinate Mg(2+).

Belongs to the RNA polymerase beta' chain family. RpoC1 subfamily. In terms of assembly, in plastids the minimal PEP RNA polymerase catalytic core is composed of four subunits: alpha, beta, beta', and beta''. When a (nuclear-encoded) sigma factor is associated with the core the holoenzyme is formed, which can initiate transcription. Mg(2+) serves as cofactor. Requires Zn(2+) as cofactor.

It is found in the plastid. It localises to the chloroplast. It catalyses the reaction RNA(n) + a ribonucleoside 5'-triphosphate = RNA(n+1) + diphosphate. DNA-dependent RNA polymerase catalyzes the transcription of DNA into RNA using the four ribonucleoside triphosphates as substrates. The protein is DNA-directed RNA polymerase subunit beta' of Acorus calamus var. americanus (American sweet flag).